A 267-amino-acid polypeptide reads, in one-letter code: Regulatory protein VirG (267 aa).

In terms of domain architecture, Response regulatory spans 29–143; the sequence is HVLLVDDDVA…EFLARIRVAL (115 aa). Aspartate 78 bears the 4-aspartylphosphate mark. A DNA-binding region (ompR/PhoB-type) is located at residues 155-255; it reads RRSFCFTDWT…ARGAGYFFDA (101 aa).

In terms of processing, phosphorylated by wide host range (WHR) VirA protein.

It is found in the cytoplasm. In terms of biological role, virG is required for the positive regulation of at least two vir loci encoded by the Ti plasmid of A.tumefaciens. The polypeptide is Regulatory protein VirG (virG) (Rhizobium radiobacter (Agrobacterium tumefaciens)).